Consider the following 757-residue polypeptide: UDP-N-acetylmuramoyl-L-alanyl-D-glutamate--2,6-diaminopimelate ligase MurE homolog, chloroplastic (757 aa).

Residues 1–11 (MATAPLAFHLP) show a composition bias toward low complexity. Residues 1–53 (MATAPLAFHLPFPFPSASRPPPRLLPPSRRPPAARLAATRRFRPPTADDEPPE) constitute a chloroplast transit peptide. Disordered stretches follow at residues 1 to 112 (MATA…DEFF), 126 to 152 (FTRR…ADEL), and 172 to 195 (VSLA…GDDG). Over residues 12-30 (FPFPSASRPPPRLLPPSRR) the composition is skewed to pro residues. 2 stretches are compositionally biased toward acidic residues: residues 47–56 (ADDEPPEAAE) and 142–152 (PEEEDGLADEL).

Belongs to the MurCDEF family. MurE subfamily. In terms of assembly, component of the plastid-encoded plastid RNA polymerase (PEP) complex.

It is found in the plastid. The protein resides in the chloroplast. Functionally, required for the activity of the plastid-encoded RNA polymerase (PEP) and full expression of genes transcribed by PEP. In Oryza sativa subsp. japonica (Rice), this protein is UDP-N-acetylmuramoyl-L-alanyl-D-glutamate--2,6-diaminopimelate ligase MurE homolog, chloroplastic.